Reading from the N-terminus, the 177-residue chain is Prorelaxin (177 aa).

The signal sequence occupies residues 1 to 25 (MLRWFLSHLLGVWLLLSQLPREIPA). 3 disulfides stabilise this stretch: cysteine 34-cysteine 164, cysteine 46-cysteine 177, and cysteine 163-cysteine 168. The propeptide at 63-149 (QISEPLAEVV…KSLSKLDKHP (87 aa)) is connecting peptide.

The protein belongs to the insulin family. As to quaternary structure, heterodimer of a B chain and an A chain linked by two disulfide bonds. As to expression, placenta; syncytiotrophoblast.

The protein localises to the secreted. Functionally, relaxin is an ovarian hormone that acts with estrogen to produce dilatation of the birth canal in many mammals. In Canis lupus familiaris (Dog), this protein is Prorelaxin (RLN).